Consider the following 740-residue polypeptide: 1,4-alpha-glucan branching enzyme GlgB (740 aa).

Residue D409 is the Nucleophile of the active site. The Proton donor role is filled by E462.

The protein belongs to the glycosyl hydrolase 13 family. GlgB subfamily. As to quaternary structure, monomer.

It catalyses the reaction Transfers a segment of a (1-&gt;4)-alpha-D-glucan chain to a primary hydroxy group in a similar glucan chain.. It participates in glycan biosynthesis; glycogen biosynthesis. In terms of biological role, catalyzes the formation of the alpha-1,6-glucosidic linkages in glycogen by scission of a 1,4-alpha-linked oligosaccharide from growing alpha-1,4-glucan chains and the subsequent attachment of the oligosaccharide to the alpha-1,6 position. In Methylococcus capsulatus (strain ATCC 33009 / NCIMB 11132 / Bath), this protein is 1,4-alpha-glucan branching enzyme GlgB.